A 486-amino-acid polypeptide reads, in one-letter code: UDP-N-acetylmuramoyl-L-alanyl-D-glutamate--2,6-diaminopimelate ligase (486 aa).

Ser-26 contributes to the UDP-N-acetyl-alpha-D-muramoyl-L-alanyl-D-glutamate binding site. 104-110 provides a ligand contact to ATP; sequence GTNGKTS. UDP-N-acetyl-alpha-D-muramoyl-L-alanyl-D-glutamate contacts are provided by residues 152–153, Ser-179, Gln-185, and Arg-187; that span reads TT. Lys-219 is subject to N6-carboxylysine. Residues Arg-383, 407 to 410, Gly-455, and Glu-459 each bind meso-2,6-diaminopimelate; that span reads DNPR. A Meso-diaminopimelate recognition motif motif is present at residues 407–410; the sequence is DNPR.

This sequence belongs to the MurCDEF family. MurE subfamily. Mg(2+) is required as a cofactor. Post-translationally, carboxylation is probably crucial for Mg(2+) binding and, consequently, for the gamma-phosphate positioning of ATP.

It localises to the cytoplasm. It carries out the reaction UDP-N-acetyl-alpha-D-muramoyl-L-alanyl-D-glutamate + meso-2,6-diaminopimelate + ATP = UDP-N-acetyl-alpha-D-muramoyl-L-alanyl-gamma-D-glutamyl-meso-2,6-diaminopimelate + ADP + phosphate + H(+). It participates in cell wall biogenesis; peptidoglycan biosynthesis. In terms of biological role, catalyzes the addition of meso-diaminopimelic acid to the nucleotide precursor UDP-N-acetylmuramoyl-L-alanyl-D-glutamate (UMAG) in the biosynthesis of bacterial cell-wall peptidoglycan. The chain is UDP-N-acetylmuramoyl-L-alanyl-D-glutamate--2,6-diaminopimelate ligase from Caulobacter vibrioides (strain ATCC 19089 / CIP 103742 / CB 15) (Caulobacter crescentus).